Here is a 939-residue protein sequence, read N- to C-terminus: MDYKSTLNLPQTPFPMKANLAQREPEQIERWRTLDLYRKVRSRRAGRDKFILHDGPPYANGEIHIGHAVNKILKDFIVKSRTLSGFDAPYVPGWDCHGLPIELMVEKKIGKAGHKVSPAEFRKACREYAAAQVDLQRREFIRLGVLGDWENPYLTMDFRFEADIVRALGRIAARGHLAKGAKPVHWCLDCGSALAEAEVEYENKHSPAIDVRFAVVDEFGLMARFHTADGALGEGPLSVVIWTTTPWTLPANQAVALNPELDYVVVQRTDIKERLVLADALMKDVMLRCGAEGYRVIGYCKGAALEGVQLRHPFYDRIVPVILGDHVTLDAGTGAVHTAPGHGQEDYAVGQRYGLAVDNPVGGDGRFLPNTELFAGEHVLSANDHVIEVLKERGALLHEARIEHSYPHCWRHKTPVIFRATPQWFIAMDKGELRRQALEAIGQVQWIPDWGQARIEAMVGNRPDWCISRQRTWGVPIPLFVHKETGALHPDTDRLIEEIAKKIETAGIDAWFELDPAELLGAEADRYGKIGDTLDVWFDSGVTHHAVLAQNPDLAFPADLYLEGSDQHRGWFQSSLMTSVAMSGQAPYKAVLTHGFTVDAEGKKMSKSRGNVVAPQKVMQTLGADVLRLWVAATDYRGEMTVSDEILKRISDVYRRIRNTARYLLANLDGFDPALHLVKPEDMLALDRWVVDRALAIQQEVIEAYETYQFNTIFQKTHHFCSVDLGSFYLDVLKDRQYTCKTDSLPRRSGQTAMYHIAEAMVRWLAPVLSFTAEEIWQYLPGQREESVFLSEWYDGLFGLDENSRCDRAFWDQMLKIREAVSKELEILRVRGEIGASLDAEVELFCDPPLFRKLSEAGDELRFVLLTSYATVKPAAEAGTDALPTEIPGLELKLAASGKPKCVRCWHHRHDVGTHPDHPELCGRCVDNVAGTGELRTFG.

Positions 57–67 (PYANGEIHIGH) match the 'HIGH' region motif. Glu563 lines the L-isoleucyl-5'-AMP pocket. A 'KMSKS' region motif is present at residues 604–608 (KMSKS). Lys607 is a binding site for ATP. Cys902, Cys905, Cys922, and Cys925 together coordinate Zn(2+).

It belongs to the class-I aminoacyl-tRNA synthetase family. IleS type 1 subfamily. Monomer. Requires Zn(2+) as cofactor.

It is found in the cytoplasm. The catalysed reaction is tRNA(Ile) + L-isoleucine + ATP = L-isoleucyl-tRNA(Ile) + AMP + diphosphate. Functionally, catalyzes the attachment of isoleucine to tRNA(Ile). As IleRS can inadvertently accommodate and process structurally similar amino acids such as valine, to avoid such errors it has two additional distinct tRNA(Ile)-dependent editing activities. One activity is designated as 'pretransfer' editing and involves the hydrolysis of activated Val-AMP. The other activity is designated 'posttransfer' editing and involves deacylation of mischarged Val-tRNA(Ile). The chain is Isoleucine--tRNA ligase from Methylococcus capsulatus (strain ATCC 33009 / NCIMB 11132 / Bath).